The following is a 323-amino-acid chain: Thymidylate synthase (323 aa).

Residues Arg-21 and 172–173 (RR) each bind dUMP. Cys-192 (nucleophile) is an active-site residue. Residues 214–217 (RSND), Asn-225, and 255–257 (HVY) contribute to the dUMP site. Asp-217 contributes to the (6R)-5,10-methylene-5,6,7,8-tetrahydrofolate binding site. Position 322 (Ala-322) interacts with (6R)-5,10-methylene-5,6,7,8-tetrahydrofolate.

Belongs to the thymidylate synthase family. Bacterial-type ThyA subfamily. In terms of assembly, homodimer.

It localises to the cytoplasm. It carries out the reaction dUMP + (6R)-5,10-methylene-5,6,7,8-tetrahydrofolate = 7,8-dihydrofolate + dTMP. It participates in pyrimidine metabolism; dTTP biosynthesis. Catalyzes the reductive methylation of 2'-deoxyuridine-5'-monophosphate (dUMP) to 2'-deoxythymidine-5'-monophosphate (dTMP) while utilizing 5,10-methylenetetrahydrofolate (mTHF) as the methyl donor and reductant in the reaction, yielding dihydrofolate (DHF) as a by-product. This enzymatic reaction provides an intracellular de novo source of dTMP, an essential precursor for DNA biosynthesis. The sequence is that of Thymidylate synthase from Pseudomonas syringae pv. tomato (strain ATCC BAA-871 / DC3000).